The following is a 533-amino-acid chain: Retinoid isomerohydrolase (533 aa).

Residue serine 2 is modified to N-acetylserine. Residues threonine 101 and threonine 105 each carry the phosphothreonine modification. The S-palmitoyl cysteine; in membrane form moiety is linked to residue cysteine 112. An N6-acetyllysine modification is found at lysine 113. Phosphoserine is present on serine 117. Histidine 180 contacts Fe cation. A lipid anchor (S-palmitoyl cysteine; in membrane form) is attached at cysteine 231. Histidine 241 and histidine 313 together coordinate Fe cation. S-palmitoyl cysteine; in membrane form attachment occurs at residues cysteine 329 and cysteine 330. Fe cation is bound at residue histidine 527.

This sequence belongs to the carotenoid oxygenase family. In terms of assembly, interacts with MYO7A; this mediates light-dependent intracellular transport of RPE65. It depends on Fe(2+) as a cofactor. In terms of processing, palmitoylation by LRAT regulates ligand binding specificity; the palmitoylated form (membrane form) specifically binds all-trans-retinyl-palmitate, while the soluble unpalmitoylated form binds all-trans-retinol (vitamin A). In terms of tissue distribution, retinal pigment epithelium specific.

The protein resides in the cytoplasm. Its subcellular location is the cell membrane. The protein localises to the microsome membrane. The catalysed reaction is an all-trans-retinyl ester + H2O = 11-cis-retinol + a fatty acid + H(+). The enzyme catalyses lutein = (3R,3'S)-zeaxanthin. It catalyses the reaction all-trans-retinyl hexadecanoate + H2O = 11-cis-retinol + hexadecanoate + H(+). Functionally, critical isomerohydrolase in the retinoid cycle involved in regeneration of 11-cis-retinal, the chromophore of rod and cone opsins. Catalyzes the cleavage and isomerization of all-trans-retinyl fatty acid esters to 11-cis-retinol which is further oxidized by 11-cis retinol dehydrogenase to 11-cis-retinal for use as visual chromophore. Essential for the production of 11-cis retinal for both rod and cone photoreceptors. Also capable of catalyzing the isomerization of lutein to meso-zeaxanthin an eye-specific carotenoid. The soluble form binds vitamin A (all-trans-retinol), making it available for LRAT processing to all-trans-retinyl ester. The membrane form, palmitoylated by LRAT, binds all-trans-retinyl esters, making them available for IMH (isomerohydrolase) processing to all-cis-retinol. The soluble form is regenerated by transferring its palmitoyl groups onto 11-cis-retinol, a reaction catalyzed by LRAT. The sequence is that of Retinoid isomerohydrolase (RPE65) from Bos taurus (Bovine).